Consider the following 148-residue polypeptide: Snaclec jerdonuxin subunit beta (148 aa).

Positions 1–23 are cleaved as a signal peptide; the sequence is MVRFIFVSFGLLVVFLSLSGIGA. 3 disulfide bridges follow: cysteine 27–cysteine 38, cysteine 55–cysteine 144, and cysteine 121–cysteine 136. The C-type lectin domain occupies 34-145; that stretch reads YDEHCYQVFQ…CSSKRYIVCK (112 aa).

Belongs to the snaclec family. In terms of assembly, tetramer of 4 heterodimers of alpha and beta subunits; disulfide-linked. As to expression, expressed by the venom gland.

It is found in the secreted. Functionally, snaclec that strongly induces platelet aggregation, in a dose-dependent manner. This Protobothrops jerdonii (Jerdon's pitviper) protein is Snaclec jerdonuxin subunit beta.